Reading from the N-terminus, the 261-residue chain is MASTPWISFTTDYGLADGFVAACHGVLARLAPTARVIDVTHLVPPGDVRRGAAVLAQTVPYLPAAVHVAVVDPGVGTARRAIALTAGNGLLVGPDNGLLLDAATALGGVDAAVELTNPDWLGARMSATFHGRDVFAPVAARLALGAPLADAGPAVEPGALVRLPTPLVQPETDGFTAEVLTVDHFGNVQLAATGALLESLPRSLRVAHRPAVHARTFDDAPPGGLLVHVDSAGLVAVAVNGGRAADLLAVTPGDQLRVTAG.

Positions 12, 72, and 187 each coordinate adenosine. (R)-S-adenosyl-L-methionine-binding residues include Asn187, Ser231, and Val239. Val239 contributes to the adenosine binding site.

Belongs to the SAM hydrolase / SAM-dependent halogenase family.

The catalysed reaction is (R)-S-adenosyl-L-methionine + H2O = adenosine + L-methionine + H(+). Its activity is regulated as follows. Activity is inhibited by chloride. Its function is as follows. Catalyzes the hydrolysis of S-adenosyl-L-methionine (SAM) into adenosine and L-methionine. Is likely stereoselective, specifically hydrolyzing (R)-S-adenosyl-L-methionine ((R)-SAM), the inactive form of the ubiquitous cofactor SAM, and not the active form of SAM, (S)-S-adenosyl-L-methionine. Probaly plays a role in preventing accumulation of (R)-S-adenosyl-L-methionine in cells; maintenance of (S)-S-denosyl-L-methionine homochirality is important for cellular health given that the (R)-form is largely inactive as a methyl donor and can function as an inhibitor of methyltransferases. Shows very slow iodinase activity in vitro. The protein is (R)-S-adenosyl-L-methionine hydrolase of Salinispora arenicola (strain CNS-205).